We begin with the raw amino-acid sequence, 284 residues long: Lipoyl synthase (284 aa).

Cys38, Cys43, Cys49, Cys64, Cys68, Cys71, and Ser277 together coordinate [4Fe-4S] cluster. Positions 50-266 (WSRGTATFLL…RDEALGMGFS (217 aa)) constitute a Radical SAM core domain.

This sequence belongs to the radical SAM superfamily. Lipoyl synthase family. [4Fe-4S] cluster is required as a cofactor.

The protein localises to the cytoplasm. It catalyses the reaction [[Fe-S] cluster scaffold protein carrying a second [4Fe-4S](2+) cluster] + N(6)-octanoyl-L-lysyl-[protein] + 2 oxidized [2Fe-2S]-[ferredoxin] + 2 S-adenosyl-L-methionine + 4 H(+) = [[Fe-S] cluster scaffold protein] + N(6)-[(R)-dihydrolipoyl]-L-lysyl-[protein] + 4 Fe(3+) + 2 hydrogen sulfide + 2 5'-deoxyadenosine + 2 L-methionine + 2 reduced [2Fe-2S]-[ferredoxin]. It participates in protein modification; protein lipoylation via endogenous pathway; protein N(6)-(lipoyl)lysine from octanoyl-[acyl-carrier-protein]: step 2/2. In terms of biological role, catalyzes the radical-mediated insertion of two sulfur atoms into the C-6 and C-8 positions of the octanoyl moiety bound to the lipoyl domains of lipoate-dependent enzymes, thereby converting the octanoylated domains into lipoylated derivatives. The chain is Lipoyl synthase from Chlorobium phaeovibrioides (strain DSM 265 / 1930) (Prosthecochloris vibrioformis (strain DSM 265)).